Consider the following 396-residue polypeptide: CCA-adding enzyme (396 aa).

G27 and R30 together coordinate ATP. Residues G27 and R30 each coordinate CTP. Positions 40 and 42 each coordinate Mg(2+). ATP contacts are provided by R111, D154, R157, R160, and R163. The CTP site is built by R111, D154, R157, R160, and R163.

This sequence belongs to the tRNA nucleotidyltransferase/poly(A) polymerase family. Bacterial CCA-adding enzyme type 3 subfamily. In terms of assembly, homodimer. Requires Mg(2+) as cofactor.

It carries out the reaction a tRNA precursor + 2 CTP + ATP = a tRNA with a 3' CCA end + 3 diphosphate. The catalysed reaction is a tRNA with a 3' CCA end + 2 CTP + ATP = a tRNA with a 3' CCACCA end + 3 diphosphate. In terms of biological role, catalyzes the addition and repair of the essential 3'-terminal CCA sequence in tRNAs without using a nucleic acid template. Adds these three nucleotides in the order of C, C, and A to the tRNA nucleotide-73, using CTP and ATP as substrates and producing inorganic pyrophosphate. tRNA 3'-terminal CCA addition is required both for tRNA processing and repair. Also involved in tRNA surveillance by mediating tandem CCA addition to generate a CCACCA at the 3' terminus of unstable tRNAs. While stable tRNAs receive only 3'-terminal CCA, unstable tRNAs are marked with CCACCA and rapidly degraded. The sequence is that of CCA-adding enzyme from Pediococcus pentosaceus (strain ATCC 25745 / CCUG 21536 / LMG 10740 / 183-1w).